The sequence spans 388 residues: MMRFTLPRDIYYGKGSLEQLKNLKGKKAMLVLGGGSMKRFGFVDKVLGYLKEAGIEVKLIEGVEPDPSVETVFKGAELMRQFEPDWIIAMGGGSPIDAAKAMWIFYEHPEKTFDDIKDPFTVPELRNKAKFLAIPSTSGTATEVTAFSVITDYKTEIKYPLADFNITPDVAVVDSELAETMPPKLTAHTGMDALTHAIEAYVATLHSPFTDPLAMQAIEMINEHLFKSYEGDKEAREQMHYAQCLAGMAFSNALLGICHSMAHKTGAVFHIPHGCANAIYLPYVIKFNSKTSLERYAKIAKQISLAGNTNEELVDSLINLVKELNKKMQIPTTLKEYGIHEQEFKNKVDLISERAIGDACTGSNPRQLNKDEMKKIFECVYYGTEVDF.

The protein belongs to the iron-containing alcohol dehydrogenase family.

Functionally, this enzyme has activity using butanol and ethanol as substrates. This is NADPH-dependent butanol dehydrogenase (adh1) from Clostridium saccharobutylicum.